A 327-amino-acid chain; its full sequence is MKNRSYEYDVALSFAGENRAYVERVANSLKTKGVKVFYDLFEEANLWGKNLYEYLSEIYQNKARYTVLFVSSFYNKKLWTNHERVSMQARAFQESREYILPARFDDTEIPGILKTIGYINLENRTPEELAVLIENKLKKDQTFFKNRWSKLSTMISPKPFIFTIKVVDEKSQLVKHAKVVLVANNSTYLEGYTDENGLAHFVIRTRKLYTVLIAHSEYPAVVFKSMNPKEDIEVTIEKTNNSGSVIINKSGQIPGISGKIEPVLKSDKNLSVYADNIAIEGGKDQPYDFELNKSIVLEDNKGNIVHLTFRFYQARIALIDFYRGRSM.

A TIR domain region spans residues 10-120; sequence VALSFAGENR…GILKTIGYIN (111 aa). Residue lysine 229 is part of the active site.

As to quaternary structure, homodimer.

It catalyses the reaction NADP(+) + H2O = ADP-D-ribose 2'-phosphate + nicotinamide + H(+). The catalysed reaction is NAD(+) = 3'cADPR + nicotinamide + H(+). Its function is as follows. NAD(+) hydrolase (NADase) that generates 3'cADPR, a cyclization variant of cyclic ADP-D-ribose (also called v2-cADPR). Also cleaves NADP(+), but does not cyclize the product. The protein is 3' cyclic ADP-D-ribose synthase AaTIR of Aquimarina amphilecti.